A 55-amino-acid polypeptide reads, in one-letter code: Myrmicitoxin(1)-Pr6b (55 aa).

A signal peptide spans 1 to 22 (MKIIYAFLLIAVVAFMGSGIMA). The propeptide occupies 23 to 29 (ESLAEAI).

The protein belongs to the formicidae venom clade 4 family. As to expression, expressed by the venom gland.

The protein resides in the secreted. Its function is as follows. Probable neurotoxin. This Pogonomyrmex rugosus (Desert harvester ant) protein is Myrmicitoxin(1)-Pr6b.